Here is a 365-residue protein sequence, read N- to C-terminus: Ribosomal RNA large subunit methyltransferase M (365 aa).

Residues Ser-188, Cys-221–Gly-224, Asp-240, Asp-260, and Asp-277 contribute to the S-adenosyl-L-methionine site. The active-site Proton acceptor is the Lys-306.

This sequence belongs to the class I-like SAM-binding methyltransferase superfamily. RNA methyltransferase RlmE family. RlmM subfamily. Monomer.

Its subcellular location is the cytoplasm. The catalysed reaction is cytidine(2498) in 23S rRNA + S-adenosyl-L-methionine = 2'-O-methylcytidine(2498) in 23S rRNA + S-adenosyl-L-homocysteine + H(+). Catalyzes the 2'-O-methylation at nucleotide C2498 in 23S rRNA. The chain is Ribosomal RNA large subunit methyltransferase M from Proteus mirabilis (strain HI4320).